Consider the following 118-residue polypeptide: Small ribosomal subunit protein uS13 (118 aa).

The disordered stretch occupies residues 94 to 118; the sequence is SLPLRGQRTKTNARTRKGPRKPIKK.

Belongs to the universal ribosomal protein uS13 family. As to quaternary structure, part of the 30S ribosomal subunit. Forms a loose heterodimer with protein S19. Forms two bridges to the 50S subunit in the 70S ribosome.

Functionally, located at the top of the head of the 30S subunit, it contacts several helices of the 16S rRNA. In the 70S ribosome it contacts the 23S rRNA (bridge B1a) and protein L5 of the 50S subunit (bridge B1b), connecting the 2 subunits; these bridges are implicated in subunit movement. Contacts the tRNAs in the A and P-sites. This chain is Small ribosomal subunit protein uS13, found in Aliivibrio fischeri (strain ATCC 700601 / ES114) (Vibrio fischeri).